We begin with the raw amino-acid sequence, 274 residues long: MAVIKMKPTSPGMRGMVKISRDHLHKGEPYAPLLEPQFQKSGRNNNGHITVRHKGGGHKHHYRVVDFKRNKDAIPAKVERIEYDPNRTAHIALLCYADGERTYIIAPRGLEVGATLISGSEAPIRVGNTLPIRNIPVGSTIHCIEMQIGKGAQIARSAGTSATLLAREGTYAQVRMRSGEVRKIHIECRATIGEVANEEHSLRRLGKAGVKRWMGIRPTVRGVVMNPVDHPHGGGEGKTGEGRHPVDPWGNLTKGYRTRNNKRTQVMIVSRRKK.

Residues 224-256 (VMNPVDHPHGGGEGKTGEGRHPVDPWGNLTKGY) form a disordered region. Residues 229 to 246 (DHPHGGGEGKTGEGRHPV) are compositionally biased toward basic and acidic residues.

This sequence belongs to the universal ribosomal protein uL2 family. In terms of assembly, part of the 50S ribosomal subunit. Forms a bridge to the 30S subunit in the 70S ribosome.

In terms of biological role, one of the primary rRNA binding proteins. Required for association of the 30S and 50S subunits to form the 70S ribosome, for tRNA binding and peptide bond formation. It has been suggested to have peptidyltransferase activity; this is somewhat controversial. Makes several contacts with the 16S rRNA in the 70S ribosome. This Polaromonas sp. (strain JS666 / ATCC BAA-500) protein is Large ribosomal subunit protein uL2.